Here is a 528-residue protein sequence, read N- to C-terminus: Cytochrome P450 1A5 (528 aa).

Position 467 (Cys467) interacts with heme.

The protein belongs to the cytochrome P450 family. The cofactor is heme.

It localises to the endoplasmic reticulum membrane. The protein localises to the microsome membrane. The catalysed reaction is an organic molecule + reduced [NADPH--hemoprotein reductase] + O2 = an alcohol + oxidized [NADPH--hemoprotein reductase] + H2O + H(+). Its function is as follows. Cytochromes P450 are a group of heme-thiolate monooxygenases. In liver microsomes, this enzyme is involved in an NADPH-dependent electron transport pathway. It oxidizes a variety of structurally unrelated compounds, including steroids, fatty acids, and xenobiotics. This chain is Cytochrome P450 1A5 (CYP1A5), found in Gallus gallus (Chicken).